The sequence spans 431 residues: Saglin (431 aa).

The N-terminal stretch at 1–39 is a signal peptide; the sequence is MSVRDYSGVQVISSRKHRSMSRLPTVLLLLASAAVLAAG. N-linked (GlcNAc...) asparagine glycosylation is present at Asn-95. A coiled-coil region spans residues 120-169; it reads LDDAQRQMEQEHRQYAATLEEQLHAAQQETQQEQEMKKALQKQLDALTDS.

Homodimer. In terms of tissue distribution, female salivary gland (at protein level). Not detected in female carcass without salivary glands, midgut and hemolymph (at protein level). Probably not expressed in male tissues.

The protein localises to the secreted. (Microbial infection) Facilitates efficient midgut colonization by Plasmodium berghei parasites. Promotes successful transmission of Plasmodium berghei at low infection densities. Functionally, (Microbial infection) Facilitates efficient midgut colonization by Plasmodium falciparum. The protein is Saglin of Anopheles coluzzii (African malaria mosquito).